The following is a 76-amino-acid chain: Protein UvsW.1 (76 aa).

In terms of assembly, probably interacts with UvsW.

Its function is as follows. Inhibits the single-stranded annealing activity of UvsW, has no effect on UvsW helicase activity. This chain is Protein UvsW.1, found in Escherichia coli (Bacteriophage T4).